The sequence spans 103 residues: Sec-independent protein translocase protein TatA (103 aa).

The helical transmembrane segment at 1–21 (MGNIFSPTHLIVILLIVLVLF) threads the bilayer. A disordered region spans residues 60 to 103 (YSKTTDVRPQQSQPLSVKRAAERRKGSSSFKEGKASVAKKQRGK).

Belongs to the TatA/E family. In terms of assembly, the Tat system comprises two distinct complexes: a TatABC complex, containing multiple copies of TatA, TatB and TatC subunits, and a separate TatA complex, containing only TatA subunits. Substrates initially bind to the TatABC complex, which probably triggers association of the separate TatA complex to form the active translocon.

Its subcellular location is the cell inner membrane. Part of the twin-arginine translocation (Tat) system that transports large folded proteins containing a characteristic twin-arginine motif in their signal peptide across membranes. TatA could form the protein-conducting channel of the Tat system. In Bartonella quintana (strain Toulouse) (Rochalimaea quintana), this protein is Sec-independent protein translocase protein TatA.